The sequence spans 765 residues: Probable dehydratase PflD (765 aa).

In terms of domain architecture, PFL spans 3 to 637 (NRISRLKTAL…VVGATPDGRF (635 aa)). The Glycine radical domain maps to 645–765 (GGLSPMLGQD…DIIRRTAHQL (121 aa)). At Gly741 the chain carries Glycine radical.

This sequence belongs to the glycyl radical enzyme (GRE) family.

Functionally, probably shows dehydratase activity. The sequence is that of Probable dehydratase PflD (pflD) from Escherichia coli (strain K12).